We begin with the raw amino-acid sequence, 525 residues long: GMP synthase [glutamine-hydrolyzing] (525 aa).

The region spanning 9-207 is the Glutamine amidotransferase type-1 domain; sequence KILILDFGSQ…IVDICGCDTL (199 aa). Cys-86 acts as the Nucleophile in catalysis. Catalysis depends on residues His-181 and Glu-183. The GMPS ATP-PPase domain maps to 208–400; that stretch reads WTPANIAQDA…LGLPYDMVYR (193 aa). 235-241 lines the ATP pocket; that stretch reads SGGVDSS.

As to quaternary structure, homodimer.

It catalyses the reaction XMP + L-glutamine + ATP + H2O = GMP + L-glutamate + AMP + diphosphate + 2 H(+). It functions in the pathway purine metabolism; GMP biosynthesis; GMP from XMP (L-Gln route): step 1/1. Catalyzes the synthesis of GMP from XMP. In Marinomonas sp. (strain MWYL1), this protein is GMP synthase [glutamine-hydrolyzing].